Consider the following 326-residue polypeptide: Toluene-4-monooxygenase system, ferredoxin--NAD(+) reductase component (326 aa).

In terms of domain architecture, 2Fe-2S ferredoxin-type spans M1–A92. [2Fe-2S] cluster is bound by residues C36, C41, C44, and C76. The ferredoxin-reductase stretch occupies residues R95–F326. One can recognise an FAD-binding FR-type domain in the interval P100–K195. FAD is bound by residues R146 to S149, I162 to K164, and K170 to S172.

Belongs to the bacterial ring-hydroxylating dioxygenase ferredoxin reductase family. In terms of assembly, monomer. The alkene monooxygenase multicomponent enzyme system is composed of an electron transfer component and a monooxygenase component interacting with the effector protein TmoD. The electron transfer component is composed of a ferredoxin reductase (TmoF) and a ferredoxin (TmoC), and the monooxygenase component is formed by a heterohexamer (dimer of heterotrimers) of two alpha subunits (TmoA), two beta subunits (TmoE) and two gamma subunits (TmoB). The cofactor is FAD. [2Fe-2S] cluster serves as cofactor.

It carries out the reaction 2 reduced [2Fe-2S]-[ferredoxin] + NAD(+) + H(+) = 2 oxidized [2Fe-2S]-[ferredoxin] + NADH. The protein operates within xenobiotic degradation; toluene degradation. Functionally, reductase component of the toluene-4-monooxygenase multicomponent enzyme system which catalyzes the O2- and NADH-dependent hydroxylation of toluene to form p-cresol. Ferredoxin reductase catalyzes the transfer of electrons from NADH to ferredoxin (TmoC). The polypeptide is Toluene-4-monooxygenase system, ferredoxin--NAD(+) reductase component (Ectopseudomonas mendocina (Pseudomonas mendocina)).